Reading from the N-terminus, the 468-residue chain is Uronate isomerase (468 aa).

The protein belongs to the metallo-dependent hydrolases superfamily. Uronate isomerase family.

It carries out the reaction D-glucuronate = D-fructuronate. The enzyme catalyses aldehydo-D-galacturonate = keto-D-tagaturonate. It functions in the pathway carbohydrate metabolism; pentose and glucuronate interconversion. The polypeptide is Uronate isomerase (Bacteroides fragilis (strain ATCC 25285 / DSM 2151 / CCUG 4856 / JCM 11019 / LMG 10263 / NCTC 9343 / Onslow / VPI 2553 / EN-2)).